The chain runs to 368 residues: Caffeine synthase 3 (368 aa).

Tyr23 is a binding site for S-adenosyl-L-homocysteine. Thr30 is a binding site for caffeine. Positions 65, 70, 102, 103, 137, and 138 each coordinate S-adenosyl-L-homocysteine. Caffeine-binding residues include Tyr155, His158, and Trp159. Asn176 is a binding site for Mg(2+). Arg224 contributes to the caffeine binding site. Mg(2+)-binding residues include Asp262, Phe264, and Asn265. Phe320 lines the caffeine pocket.

It belongs to the methyltransferase superfamily. Type-7 methyltransferase family. The cofactor is Mg(2+).

The catalysed reaction is theobromine + S-adenosyl-L-methionine = caffeine + S-adenosyl-L-homocysteine + H(+). It carries out the reaction 7-methylxanthine + S-adenosyl-L-methionine = theobromine + S-adenosyl-L-homocysteine + H(+). It functions in the pathway alkaloid biosynthesis. In terms of biological role, involved in the biosynthesis of caffeine. Catalyzes the conversion of 7-methylxanthine (7mX) to theobromine and of theobromine to caffeine. This is Caffeine synthase 3 from Camellia sinensis (Tea plant).